A 131-amino-acid polypeptide reads, in one-letter code: MGRVRTKTVKKAAKVIIEKYYTRLTLDFHTNKRICEEVAIIPTKPLRNKIAGYVTHLMGRLRHSQVRGISIKLQEEERERRDNYVPAVSALEQDIIEVDADTKEMLKLLDFHNIRGLQLTQPNTNNFGRRN.

The protein belongs to the eukaryotic ribosomal protein eS17 family.

This chain is Small ribosomal subunit protein eS17 (RpS17), found in Drosophila melanogaster (Fruit fly).